The primary structure comprises 188 residues: Adenine phosphoribosyltransferase (188 aa).

The protein belongs to the purine/pyrimidine phosphoribosyltransferase family. In terms of assembly, homodimer.

Its subcellular location is the cytoplasm. It catalyses the reaction AMP + diphosphate = 5-phospho-alpha-D-ribose 1-diphosphate + adenine. It participates in purine metabolism; AMP biosynthesis via salvage pathway; AMP from adenine: step 1/1. Functionally, catalyzes a salvage reaction resulting in the formation of AMP, that is energically less costly than de novo synthesis. The chain is Adenine phosphoribosyltransferase from Neisseria meningitidis serogroup C (strain 053442).